A 370-amino-acid polypeptide reads, in one-letter code: Dihydroorotate dehydrogenase (quinone) (370 aa).

FMN-binding positions include 80-84 (AGFDK) and Thr104. Lys84 is a substrate binding site. Substrate is bound at residue 129–133 (NRMGF). 2 residues coordinate FMN: Asn157 and Asn190. Asn190 lines the substrate pocket. Catalysis depends on Ser193, which acts as the Nucleophile. Asn195 lines the substrate pocket. Residues Lys226 and Thr254 each coordinate FMN. 255–256 (NT) contacts substrate. Residues Gly278, Gly307, and 328-329 (YT) contribute to the FMN site.

Belongs to the dihydroorotate dehydrogenase family. Type 2 subfamily. As to quaternary structure, monomer. It depends on FMN as a cofactor.

The protein localises to the cell membrane. The enzyme catalyses (S)-dihydroorotate + a quinone = orotate + a quinol. It functions in the pathway pyrimidine metabolism; UMP biosynthesis via de novo pathway; orotate from (S)-dihydroorotate (quinone route): step 1/1. In terms of biological role, catalyzes the conversion of dihydroorotate to orotate with quinone as electron acceptor. This Mycolicibacterium paratuberculosis (strain ATCC BAA-968 / K-10) (Mycobacterium paratuberculosis) protein is Dihydroorotate dehydrogenase (quinone).